A 32-amino-acid chain; its full sequence is Yop proteins translocation protein A (32 aa).

This Yersinia pestis protein is Yop proteins translocation protein A (yscA).